Here is an 85-residue protein sequence, read N- to C-terminus: U4-theraphotoxin-Hhn1q (85 aa).

The signal sequence occupies residues 1–22; sequence MKVTLIAILTCAAVLVLHTTAA. Positions 23-48 are excised as a propeptide; sequence EELEAESQLMEVGMPDTELAAVDEER. 3 cysteine pairs are disulfide-bonded: C52–C66, C56–C77, and C71–C82.

It belongs to the neurotoxin 12 (Hwtx-2) family. 02 (Hwtx-2) subfamily. As to expression, expressed by the venom gland.

Its subcellular location is the secreted. Postsynaptic neurotoxin. The chain is U4-theraphotoxin-Hhn1q from Cyriopagopus hainanus (Chinese bird spider).